A 430-amino-acid polypeptide reads, in one-letter code: Adenylosuccinate synthetase (430 aa).

GTP-binding positions include 13 to 19 (GDEGKGK) and 41 to 43 (GHT). D14 (proton acceptor) is an active-site residue. Mg(2+) is bound by residues D14 and G41. IMP-binding positions include 14–17 (DEGK), 39–42 (NAGH), T130, R144, Q225, T240, and R304. The active-site Proton donor is H42. A substrate-binding site is contributed by 300–306 (ATTGRAR). GTP-binding positions include R306, 332-334 (KLD), and 414-416 (STG).

The protein belongs to the adenylosuccinate synthetase family. Homodimer. The cofactor is Mg(2+).

The protein resides in the cytoplasm. The catalysed reaction is IMP + L-aspartate + GTP = N(6)-(1,2-dicarboxyethyl)-AMP + GDP + phosphate + 2 H(+). Its pathway is purine metabolism; AMP biosynthesis via de novo pathway; AMP from IMP: step 1/2. Its function is as follows. Plays an important role in the de novo pathway of purine nucleotide biosynthesis. Catalyzes the first committed step in the biosynthesis of AMP from IMP. The sequence is that of Adenylosuccinate synthetase from Pseudomonas syringae pv. syringae (strain B728a).